A 295-amino-acid chain; its full sequence is Energy-coupling factor transporter ATP-binding protein EcfA2 (295 aa).

Residues 3–246 (ITFKQVDFTY…PAWLTAHQLG (244 aa)) enclose the ABC transporter domain. Residue 40–47 (GHTGSGKS) coordinates ATP.

Belongs to the ABC transporter superfamily. Energy-coupling factor EcfA family. In terms of assembly, forms a stable energy-coupling factor (ECF) transporter complex composed of 2 membrane-embedded substrate-binding proteins (S component), 2 ATP-binding proteins (A component) and 2 transmembrane proteins (T component).

Its subcellular location is the cell membrane. In terms of biological role, ATP-binding (A) component of a common energy-coupling factor (ECF) ABC-transporter complex. Unlike classic ABC transporters this ECF transporter provides the energy necessary to transport a number of different substrates. The sequence is that of Energy-coupling factor transporter ATP-binding protein EcfA2 from Lactiplantibacillus plantarum (strain ATCC BAA-793 / NCIMB 8826 / WCFS1) (Lactobacillus plantarum).